The sequence spans 132 residues: Small ribosomal subunit protein uS8c (132 aa).

This sequence belongs to the universal ribosomal protein uS8 family. Part of the 30S ribosomal subunit.

It localises to the plastid. It is found in the chloroplast. Functionally, one of the primary rRNA binding proteins, it binds directly to 16S rRNA central domain where it helps coordinate assembly of the platform of the 30S subunit. This chain is Small ribosomal subunit protein uS8c (rps8), found in Psilotum nudum (Whisk fern).